Consider the following 149-residue polypeptide: Probable flagellum biosynthesis repressor protein FlbT (149 aa).

The protein belongs to the FlbT family.

Its function is as follows. Has a post-transcriptional repressor function in flagellum biogenesis. Associates with the 5'-UTR of fljK mRNA and promotes its degradation. The polypeptide is Probable flagellum biosynthesis repressor protein FlbT (Agrobacterium fabrum (strain C58 / ATCC 33970) (Agrobacterium tumefaciens (strain C58))).